Consider the following 149-residue polypeptide: 6,7-dimethyl-8-ribityllumazine synthase (149 aa).

Residues Phe22, 56–58 (ALE), and 80–82 (AVI) contribute to the 5-amino-6-(D-ribitylamino)uracil site. Residue 85 to 86 (ET) participates in (2S)-2-hydroxy-3-oxobutyl phosphate binding. Catalysis depends on His88, which acts as the Proton donor. Asn113 contributes to the 5-amino-6-(D-ribitylamino)uracil binding site. Residue Arg127 coordinates (2S)-2-hydroxy-3-oxobutyl phosphate.

Belongs to the DMRL synthase family.

It catalyses the reaction (2S)-2-hydroxy-3-oxobutyl phosphate + 5-amino-6-(D-ribitylamino)uracil = 6,7-dimethyl-8-(1-D-ribityl)lumazine + phosphate + 2 H2O + H(+). Its pathway is cofactor biosynthesis; riboflavin biosynthesis; riboflavin from 2-hydroxy-3-oxobutyl phosphate and 5-amino-6-(D-ribitylamino)uracil: step 1/2. Its function is as follows. Catalyzes the formation of 6,7-dimethyl-8-ribityllumazine by condensation of 5-amino-6-(D-ribitylamino)uracil with 3,4-dihydroxy-2-butanone 4-phosphate. This is the penultimate step in the biosynthesis of riboflavin. This is 6,7-dimethyl-8-ribityllumazine synthase from Methylobacillus flagellatus (strain ATCC 51484 / DSM 6875 / VKM B-1610 / KT).